The following is a 132-amino-acid chain: Transmembrane protein 170B (132 aa).

Topologically, residues 1–37 (MKAEGGDHSMINLSVQQVLSLWAHGTVLRNLTEMWYW) are extracellular. N-linked (GlcNAc...) asparagine glycosylation occurs at N12. The chain crosses the membrane as a helical span at residues 38-58 (IFLWALFSSLFVHGAAGVLMF). Residues 59–68 (VMLQRHRQGR) lie on the Cytoplasmic side of the membrane. A helical membrane pass occupies residues 69 to 89 (VISVIAVSIGFLASVTGAMIT). Over 90-104 (SAAVAGIYRVAGKNM) the chain is Extracellular. Residues 105–125 (APLEALVWGVGQTVLTLIISF) traverse the membrane as a helical segment. The Cytoplasmic portion of the chain corresponds to 126–132 (SRILATL).

It belongs to the TMEM170 family. As to quaternary structure, interacts with CTNNB1. As to expression, expressed in normal breast tissues. Down-regulated in breast cancer cells (at protein level).

The protein localises to the cell membrane. Negatively regulates the canonical Wnt signaling in breast cancer cells. Exerts an inhibitory effect on breast cancer growth by inhibiting CTNNB1 stabilization and nucleus translocation, which reduces the activity of Wnt targets. The chain is Transmembrane protein 170B (TMEM170B) from Homo sapiens (Human).